The primary structure comprises 247 residues: tRNA pseudouridine synthase A (247 aa).

Asp53 functions as the Nucleophile in the catalytic mechanism. Tyr111 lines the substrate pocket.

It belongs to the tRNA pseudouridine synthase TruA family. Homodimer.

The catalysed reaction is uridine(38/39/40) in tRNA = pseudouridine(38/39/40) in tRNA. In terms of biological role, formation of pseudouridine at positions 38, 39 and 40 in the anticodon stem and loop of transfer RNAs. The chain is tRNA pseudouridine synthase A from Bacillus velezensis (strain DSM 23117 / BGSC 10A6 / LMG 26770 / FZB42) (Bacillus amyloliquefaciens subsp. plantarum).